Reading from the N-terminus, the 580-residue chain is Sensor histidine kinase YvrG (580 aa).

Topologically, residues 1–6 (MRLRWK) are cytoplasmic. A helical transmembrane segment spans residues 7–27 (FLFHFFGQMLIVILLLTVMLV). At 28 to 261 (ASFFYLDARF…KSFLKVVLKA (234 aa)) the chain is on the extracellular side. A helical membrane pass occupies residues 262-282 (MFLVMAVLFMYIIWMTVWYMF). Over 283–580 (RFGLPIFHTI…TVITILFKKQ (298 aa)) the chain is Cytoplasmic. The 218-residue stretch at 363 to 580 (GLSHDLKTPL…TVITILFKKQ (218 aa)) folds into the Histidine kinase domain. H366 carries the phosphohistidine; by autocatalysis modification.

It is found in the cell membrane. It catalyses the reaction ATP + protein L-histidine = ADP + protein N-phospho-L-histidine.. Its function is as follows. Member of the two-component regulatory system YvrG/YvrH that positively regulates 7 transcriptional units (wprA, wapA-yxxG, dltABCDE, sunA, sunT-bdbA-yolJ-bdbB, sigO-rsoA, and sigX-rsiX), and negatively regulates the lytABC operon. Probably activates YvrH by phosphorylation. The sequence is that of Sensor histidine kinase YvrG (yvrG) from Bacillus subtilis (strain 168).